The chain runs to 185 residues: Ribosome-recycling factor (185 aa).

The protein belongs to the RRF family.

The protein resides in the cytoplasm. Responsible for the release of ribosomes from messenger RNA at the termination of protein biosynthesis. May increase the efficiency of translation by recycling ribosomes from one round of translation to another. This is Ribosome-recycling factor from Campylobacter hominis (strain ATCC BAA-381 / DSM 21671 / CCUG 45161 / LMG 19568 / NCTC 13146 / CH001A).